Reading from the N-terminus, the 70-residue chain is Cold shock protein CspV (70 aa).

Residues 7–67 (GSVKWFNETK…GKKGPQASNV (61 aa)) form the CSD domain.

It is found in the cytoplasm. In Vibrio cholerae serotype O1 (strain ATCC 39315 / El Tor Inaba N16961), this protein is Cold shock protein CspV (cspV).